The primary structure comprises 501 residues: L-arabinose isomerase (501 aa).

Mn(2+)-binding residues include glutamate 307, glutamate 334, histidine 351, and histidine 450.

Belongs to the arabinose isomerase family. Requires Mn(2+) as cofactor.

It catalyses the reaction beta-L-arabinopyranose = L-ribulose. The protein operates within carbohydrate degradation; L-arabinose degradation via L-ribulose; D-xylulose 5-phosphate from L-arabinose (bacterial route): step 1/3. Catalyzes the conversion of L-arabinose to L-ribulose. The sequence is that of L-arabinose isomerase from Acidothermus cellulolyticus (strain ATCC 43068 / DSM 8971 / 11B).